The chain runs to 368 residues: Peptide chain release factor 2 (368 aa).

N5-methylglutamine is present on Q251.

Belongs to the prokaryotic/mitochondrial release factor family. Post-translationally, methylated by PrmC. Methylation increases the termination efficiency of RF2.

The protein localises to the cytoplasm. Peptide chain release factor 2 directs the termination of translation in response to the peptide chain termination codons UGA and UAA. The protein is Peptide chain release factor 2 of Nitratiruptor sp. (strain SB155-2).